The primary structure comprises 100 residues: UPF0213 protein YhbQ (100 aa).

A GIY-YIG domain is found at 2-77; it reads TPWFLYLIRT…KQLTKRQKER (76 aa).

Belongs to the UPF0213 family.

The protein is UPF0213 protein YhbQ of Escherichia coli O127:H6 (strain E2348/69 / EPEC).